Reading from the N-terminus, the 800-residue chain is Phenylalanine--tRNA ligase beta subunit (800 aa).

Residues threonine 39–leucine 154 enclose the tRNA-binding domain. One can recognise a B5 domain in the interval alanine 408–serine 483. Residues aspartate 461, aspartate 467, glutamate 470, and glutamate 471 each contribute to the Mg(2+) site. Positions proline 708–arginine 800 constitute an FDX-ACB domain.

Belongs to the phenylalanyl-tRNA synthetase beta subunit family. Type 1 subfamily. In terms of assembly, tetramer of two alpha and two beta subunits. Mg(2+) is required as a cofactor.

Its subcellular location is the cytoplasm. It carries out the reaction tRNA(Phe) + L-phenylalanine + ATP = L-phenylalanyl-tRNA(Phe) + AMP + diphosphate + H(+). The chain is Phenylalanine--tRNA ligase beta subunit from Staphylococcus aureus (strain MRSA252).